Reading from the N-terminus, the 179-residue chain is Translation initiation factor IF-3 (179 aa).

This sequence belongs to the IF-3 family. As to quaternary structure, monomer.

The protein localises to the cytoplasm. Its function is as follows. IF-3 binds to the 30S ribosomal subunit and shifts the equilibrium between 70S ribosomes and their 50S and 30S subunits in favor of the free subunits, thus enhancing the availability of 30S subunits on which protein synthesis initiation begins. This Leptospira borgpetersenii serovar Hardjo-bovis (strain L550) protein is Translation initiation factor IF-3.